We begin with the raw amino-acid sequence, 204 residues long: UPF0637 protein Lm4b_01081 (204 aa).

This sequence belongs to the UPF0637 family.

This Listeria monocytogenes serotype 4b (strain CLIP80459) protein is UPF0637 protein Lm4b_01081.